We begin with the raw amino-acid sequence, 344 residues long: 17-beta-hydroxysteroid dehydrogenase type 1 (344 aa).

NAD(+) is bound at residue 3 to 32; that stretch reads PTVVLITGCSSGIGMHLAVRLASDRSQSFK. Residues 10-38 and aspartate 66 contribute to the NADP(+) site; that span reads GCSSGIGMHLAVRLASDRSQSFKVYATLR. The residue at position 135 (serine 135) is a Phosphoserine. A substrate-binding site is contributed by serine 143. The active-site Proton acceptor is the tyrosine 156. NADP(+) is bound at residue lysine 160.

This sequence belongs to the short-chain dehydrogenases/reductases (SDR) family. As to quaternary structure, homodimer. Exists predominantly as a homodimer but also exits as monomer.

It is found in the cytoplasm. It carries out the reaction 17beta-estradiol + NAD(+) = estrone + NADH + H(+). The catalysed reaction is 17beta-estradiol + NADP(+) = estrone + NADPH + H(+). The enzyme catalyses testosterone + NADP(+) = androst-4-ene-3,17-dione + NADPH + H(+). It functions in the pathway steroid biosynthesis; estrogen biosynthesis. Functionally, favors the reduction of estrogens and androgens. Converts estrone (E1) to a more potent estrogen, 17beta-estradiol (E2). Also has 20-alpha-HSD activity. Uses preferentially NADH. This Mus musculus (Mouse) protein is 17-beta-hydroxysteroid dehydrogenase type 1.